The chain runs to 409 residues: Tyrosine--tRNA ligase (409 aa).

The 'HIGH' region signature appears at 43–52 (PTAPDLHLGH). Residues 227 to 231 (KMSKS) carry the 'KMSKS' region motif. Position 230 (K230) interacts with ATP. The S4 RNA-binding domain maps to 338–399 (LALPQLLKLA…GKRKFAKVTL (62 aa)).

It belongs to the class-I aminoacyl-tRNA synthetase family. TyrS type 2 subfamily. In terms of assembly, homodimer.

The protein localises to the cytoplasm. It carries out the reaction tRNA(Tyr) + L-tyrosine + ATP = L-tyrosyl-tRNA(Tyr) + AMP + diphosphate + H(+). Its function is as follows. Catalyzes the attachment of tyrosine to tRNA(Tyr) in a two-step reaction: tyrosine is first activated by ATP to form Tyr-AMP and then transferred to the acceptor end of tRNA(Tyr). The protein is Tyrosine--tRNA ligase of Nitrosomonas europaea (strain ATCC 19718 / CIP 103999 / KCTC 2705 / NBRC 14298).